The following is a 149-amino-acid chain: Large ribosomal subunit protein bL9 (149 aa).

Belongs to the bacterial ribosomal protein bL9 family.

Its function is as follows. Binds to the 23S rRNA. This chain is Large ribosomal subunit protein bL9, found in Glaesserella parasuis serovar 5 (strain SH0165) (Haemophilus parasuis).